A 275-amino-acid polypeptide reads, in one-letter code: NH(3)-dependent NAD(+) synthetase (275 aa).

Position 50–57 (50–57) interacts with ATP; it reads GISGGVDS. Position 56 (D56) interacts with Mg(2+). R147 provides a ligand contact to deamido-NAD(+). T167 lines the ATP pocket. A Mg(2+)-binding site is contributed by E172. K180 and D187 together coordinate deamido-NAD(+). ATP-binding residues include K196 and T218. 267-268 lines the deamido-NAD(+) pocket; sequence HK.

It belongs to the NAD synthetase family. In terms of assembly, homodimer.

The enzyme catalyses deamido-NAD(+) + NH4(+) + ATP = AMP + diphosphate + NAD(+) + H(+). It functions in the pathway cofactor biosynthesis; NAD(+) biosynthesis; NAD(+) from deamido-NAD(+) (ammonia route): step 1/1. Functionally, catalyzes the ATP-dependent amidation of deamido-NAD to form NAD. Uses ammonia as a nitrogen source. In Pseudomonas putida (strain GB-1), this protein is NH(3)-dependent NAD(+) synthetase.